The primary structure comprises 588 residues: Phenol 2-monooxygenase fsqG (588 aa).

Residues 9–38, 17–18, 37–39, 45–50, Y232, 289–299, D299, and 309–313 contribute to the FAD site; these read DVLI…LIDW, PA, DWK, TGRADG, ARHNRIFLAGD, and GQGMN. Residues D49 and Y232 each coordinate substrate.

This sequence belongs to the PheA/TfdB FAD monooxygenase family. Homodimer. FAD is required as a cofactor.

The protein operates within secondary metabolite biosynthesis. Phenol 2-monooxygenase; part of the gene cluster that mediates the biosynthesis of the isoquinoline alkaloids fumisoquin A, fumisoquin B and fumisoquin C; as well as small amounts of fumipyrrole as a shunt metabolite. The products of the cluster lead to a brown coloration and are important for growth and conidiation. The nonribosomal peptide synthetase-like protein fsqF, which lacks a canonical condensation domain, is required for addition of a serine-derived dehydroalanine moiety to activated tyrosine but is not essential for the subsequent steps leading to isoquinoline formation. A different enzyme, most likely the ATP-grasp enzyme fsqD, is responsible for activation of tyrosine. Three additional enzymes encoded by the fsq cluster, the N-methyltransferase fsqC, the phenol 2-monooxygenase fsqG and the FAD-dependent oxidase fsqB, catalyze the formation of the isoquinoline ring system in the fumisoquins. FsqB converts the fspF thiolation domain-bound (2S,4S,5S)-2-amino-6-(3,4-dihydroxyphenyl)-4-hydroxy-5-(methylamino)hexanoyl into isoquinoline. The cyclization most likely proceeds via a two-step mechanism, beginning with FAD-dependent oxidation of the methyl group to an iminium species followed by electrophilic attack on the deprotonated phenol. The sequence is that of Phenol 2-monooxygenase fsqG from Aspergillus fumigatus (strain ATCC MYA-4609 / CBS 101355 / FGSC A1100 / Af293) (Neosartorya fumigata).